Here is a 276-residue protein sequence, read N- to C-terminus: Stathmin domain-containing protein 1 (276 aa).

Disordered stretches follow at residues 1–40 (MGCG…ENCS), 61–106 (VQMG…RERQ), and 226–250 (GFEP…ATLI). The N-myristoyl glycine moiety is linked to residue glycine 2. 2 stretches are compositionally biased toward polar residues: residues 68–78 (GTISENSPSPS) and 87–100 (DLVT…PQSL). One can recognise an SLD domain in the interval 118 to 244 (QGIIQSHSKV…GKPLKRKKSK (127 aa)).

The sequence is that of Stathmin domain-containing protein 1 (STMND1) from Homo sapiens (Human).